The sequence spans 1207 residues: Chromosomal serine/threonine-protein kinase JIL-1 (1207 aa).

The span at 1-19 shows a compositional bias: polar residues; the sequence is MSRLQKQNYEILSGTSTSR. 3 disordered regions span residues 1–119, 164–183, and 210–230; these read MSRL…ASAR, QDME…SSSL, and SSST…LDLD. Residues serine 29 and serine 31 each carry the phosphoserine modification. Over residues 45-69 the composition is skewed to polar residues; that stretch reads LNGQLVANGNGKTRKNSNSETMTNG. Over residues 88–97 the composition is skewed to low complexity; it reads NYNNNNNNNN. The segment covering 98-108 has biased composition (polar residues); the sequence is SISATNGQYTN. The span at 109 to 118 shows a compositional bias: low complexity; it reads SSSKTTSASA. Over residues 164-178 the composition is skewed to acidic residues; that stretch reads QDMEEDEPNGIEIDE. A compositionally biased stretch (polar residues) spans 213–226; the sequence is TTPSYAMPTSNSTP. In terms of domain architecture, Protein kinase 1 spans 261 to 530; it reads FKIIRVLGTG…ASEIKEHPFF (270 aa). Residues 267-275 and lysine 293 each bind ATP; that span reads LGTGAYGRV. The active-site Proton acceptor is the aspartate 389. Serine 424 carries the post-translational modification Phosphoserine. In terms of domain architecture, AGC-kinase C-terminal spans 531 to 599; that stretch reads NGINWQELRT…VAPEHLEQMR (69 aa). A Phosphothreonine modification is found at threonine 588. The region spanning 623-886 is the Protein kinase 2 domain; sequence LELGTRTSNG…LSDILDSEWL (264 aa). Residues 629–637 and lysine 652 each bind ATP; that span reads TSNGAYGTC. Aspartate 739 functions as the Proton acceptor in the catalytic mechanism. Threonine 1045 carries the phosphothreonine modification. Position 1047 is a phosphoserine (serine 1047). Residues 1168–1197 form a disordered region; the sequence is TFPRPKAQLKRTKREPKVPRPPTRVQPERA.

This sequence belongs to the protein kinase superfamily. Ser/Thr protein kinase family. Interacts with lola. Interacts with proteins of the male specific lethal (MSL) dosage compensation complex; this interaction is mediated by the kinase domains. Mg(2+) serves as cofactor. Autophosphorylated in vitro.

Its subcellular location is the nucleus. It is found in the chromosome. It catalyses the reaction L-seryl-[protein] + ATP = O-phospho-L-seryl-[protein] + ADP + H(+). The catalysed reaction is L-threonyl-[protein] + ATP = O-phospho-L-threonyl-[protein] + ADP + H(+). Functionally, phosphorylates 'Ser-10' of histone H3. May regulate gene expression by establishing or maintaining the structure of more open chromatin regions. Also required for normal polytene chromosome structure, for oogenesis and for viability throughout development. Regulates the structure of polytene chromosomes in salivary glands. May phosphorylate 'Ser-1' of histone H2A. This is Chromosomal serine/threonine-protein kinase JIL-1 from Drosophila melanogaster (Fruit fly).